Consider the following 195-residue polypeptide: ATP-dependent Clp protease proteolytic subunit (195 aa).

The active-site Nucleophile is the S98. The active site involves H123.

It belongs to the peptidase S14 family. Fourteen ClpP subunits assemble into 2 heptameric rings which stack back to back to give a disk-like structure with a central cavity, resembling the structure of eukaryotic proteasomes.

It is found in the cytoplasm. The enzyme catalyses Hydrolysis of proteins to small peptides in the presence of ATP and magnesium. alpha-casein is the usual test substrate. In the absence of ATP, only oligopeptides shorter than five residues are hydrolyzed (such as succinyl-Leu-Tyr-|-NHMec, and Leu-Tyr-Leu-|-Tyr-Trp, in which cleavage of the -Tyr-|-Leu- and -Tyr-|-Trp bonds also occurs).. Functionally, cleaves peptides in various proteins in a process that requires ATP hydrolysis. Has a chymotrypsin-like activity. Plays a major role in the degradation of misfolded proteins. This chain is ATP-dependent Clp protease proteolytic subunit, found in Staphylococcus aureus (strain Mu3 / ATCC 700698).